The primary structure comprises 289 residues: 4-hydroxy-tetrahydrodipicolinate synthase (289 aa).

Threonine 43 serves as a coordination point for pyruvate. The Proton donor/acceptor role is filled by tyrosine 131. Lysine 160 functions as the Schiff-base intermediate with substrate in the catalytic mechanism. Position 200 (valine 200) interacts with pyruvate.

Belongs to the DapA family. As to quaternary structure, homotetramer; dimer of dimers.

The protein localises to the cytoplasm. It carries out the reaction L-aspartate 4-semialdehyde + pyruvate = (2S,4S)-4-hydroxy-2,3,4,5-tetrahydrodipicolinate + H2O + H(+). It participates in amino-acid biosynthesis; L-lysine biosynthesis via DAP pathway; (S)-tetrahydrodipicolinate from L-aspartate: step 3/4. Its function is as follows. Catalyzes the condensation of (S)-aspartate-beta-semialdehyde [(S)-ASA] and pyruvate to 4-hydroxy-tetrahydrodipicolinate (HTPA). The polypeptide is 4-hydroxy-tetrahydrodipicolinate synthase (Methanococcus maripaludis (strain C7 / ATCC BAA-1331)).